The following is a 166-amino-acid chain: Phosphopantetheine adenylyltransferase (166 aa).

S11 serves as a coordination point for substrate. ATP is bound by residues 11 to 12 (SF) and H19. Substrate-binding residues include K43, V80, and R94. ATP-binding positions include 95–97 (GLR), E105, and 130–136 (VRTITAT).

It belongs to the bacterial CoaD family. Homohexamer. Requires Mg(2+) as cofactor.

It is found in the cytoplasm. It carries out the reaction (R)-4'-phosphopantetheine + ATP + H(+) = 3'-dephospho-CoA + diphosphate. The protein operates within cofactor biosynthesis; coenzyme A biosynthesis; CoA from (R)-pantothenate: step 4/5. Reversibly transfers an adenylyl group from ATP to 4'-phosphopantetheine, yielding dephospho-CoA (dPCoA) and pyrophosphate. The protein is Phosphopantetheine adenylyltransferase of Mesorhizobium japonicum (strain LMG 29417 / CECT 9101 / MAFF 303099) (Mesorhizobium loti (strain MAFF 303099)).